The primary structure comprises 434 residues: N-lysine methyltransferase SMYD2-B (434 aa).

The region spanning 8–242 (PGIEQFASPG…PGQEIYTSYI (235 aa)) is the SET domain. 18–20 (KGR) provides a ligand contact to S-adenosyl-L-methionine. The Zn(2+) site is built by cysteine 53, cysteine 56, cysteine 66, cysteine 69, cysteine 75, cysteine 79, histidine 87, and cysteine 91. Residues 53–91 (CEQCFTRKKGLAKCGKCKKAFYCNANCQKKNWPMHKLEC) form an MYND-type zinc finger. S-adenosyl-L-methionine-binding positions include histidine 138, 207–208 (NH), and 259–261 (YYF).

Belongs to the class V-like SAM-binding methyltransferase superfamily.

It localises to the cytoplasm. The protein localises to the cytosol. It is found in the nucleus. The enzyme catalyses L-lysyl(4)-[histone H3] + 3 S-adenosyl-L-methionine = N(6),N(6),N(6)-trimethyl-L-lysyl(4)-[histone H3] + 3 S-adenosyl-L-homocysteine + 3 H(+). It carries out the reaction L-lysyl-[protein] + S-adenosyl-L-methionine = N(6)-methyl-L-lysyl-[protein] + S-adenosyl-L-homocysteine + H(+). Its function is as follows. Protein-lysine N-methyltransferase that methylates both histones and non-histone proteins, including p53/TP53 and RB1. Specifically trimethylates histone H3 'Lys-4' (H3K4me3) in vivo. The activity requires interaction with HSP90alpha. Shows even higher methyltransferase activity on p53/TP53. Monomethylates 'Lys-370' of p53/TP53, leading to decreased DNA-binding activity and subsequent transcriptional regulation activity of p53/TP53. Monomethylates RB1 at 'Lys-860'. The chain is N-lysine methyltransferase SMYD2-B (smyd2b) from Danio rerio (Zebrafish).